We begin with the raw amino-acid sequence, 437 residues long: Ribosomal protein uS12 methylthiotransferase RimO (437 aa).

The region spanning 9–125 (PAIFLLSLGC…VLAAIGAHYC (117 aa)) is the MTTase N-terminal domain. Residues cysteine 18, cysteine 54, cysteine 88, cysteine 149, cysteine 153, and cysteine 156 each contribute to the [4Fe-4S] cluster site. Positions 135-364 (LTPPHYAFLK…MELQESIAAS (230 aa)) constitute a Radical SAM core domain. A TRAM domain is found at 367–434 (RKLEGQTLTV…AYELFGRVGS (68 aa)).

Belongs to the methylthiotransferase family. RimO subfamily. [4Fe-4S] cluster serves as cofactor.

The protein localises to the cytoplasm. It carries out the reaction L-aspartate(89)-[ribosomal protein uS12]-hydrogen + (sulfur carrier)-SH + AH2 + 2 S-adenosyl-L-methionine = 3-methylsulfanyl-L-aspartate(89)-[ribosomal protein uS12]-hydrogen + (sulfur carrier)-H + 5'-deoxyadenosine + L-methionine + A + S-adenosyl-L-homocysteine + 2 H(+). Functionally, catalyzes the methylthiolation of an aspartic acid residue of ribosomal protein uS12. The polypeptide is Ribosomal protein uS12 methylthiotransferase RimO (Chlorobaculum parvum (strain DSM 263 / NCIMB 8327) (Chlorobium vibrioforme subsp. thiosulfatophilum)).